We begin with the raw amino-acid sequence, 1578 residues long: FH1/FH2 domain-containing protein 3 (1578 aa).

Residues 18-405 (NSTNFPEPSR…DLCEKDEEEE (388 aa)) form the GBD/FH3 domain. Disordered stretches follow at residues 324-518 (HEDG…DKLP), 535-824 (SPLL…GVNG), 915-942 (VGRGAISPDVESQDKVPDTPPAQLKTES), 979-1013 (LGHREAPGPPPPPPPTFLGLPPPPPPPLLDSVPPP), 1418-1462 (QQKQ…YAED), 1490-1514 (RTRSRASRGSTSSWTMGTEESPSVT), and 1528-1565 (SATQVPSQRVVPRERKRSRANRKSLRRTLKSGLTPEEA). Phosphoserine is present on residues S345 and S376. A compositionally biased stretch (polar residues) spans 368 to 383 (IQNIKSPLSAPTSPCS). Residues 399–425 (EKDEEEEEEEEQPITEPNSEEEREDDA) show a composition bias toward acidic residues. At T413 the chain carries Phosphothreonine. Residues 434–446 (ASSASGQSSPGKD) show a composition bias toward low complexity. The span at 453–473 (ALHTTSSPTSQGRWLSASTAA) shows a compositional bias: polar residues. Over residues 553-583 (SNFSSNSFQSSRPSPGPSGSPSYASSFSSPQ) the composition is skewed to low complexity. Positions 584–598 (DTRSSPSGLLTSSFR) are enriched in polar residues. A coiled-coil region spans residues 597 to 645 (FRQHQESLAAERERRRQEREERLQRIEREERNKFNREYLDKREEQRQAR). Over residues 599–651 (QHQESLAAERERRRQEREERLQRIEREERNKFNREYLDKREEQRQARGERYKY) the composition is skewed to basic and acidic residues. 2 stretches are compositionally biased toward low complexity: residues 675–684 (DLSLDLSLPA) and 692–701 (SSQSPSADSQ). The span at 751-761 (SQEEPVLELEP) shows a compositional bias: acidic residues. Basic and acidic residues predominate over residues 762–782 (EERASLSEKERQNEEVNERDN). Residues 784-793 (SASSISSSSS) show a composition bias toward low complexity. Residues 795–809 (LEREEKEDKLSEDRA) show a composition bias toward basic and acidic residues. Phosphoserine is present on S921. The residue at position 933 (T933) is a Phosphothreonine. The span at 985-1013 (PGPPPPPPPTFLGLPPPPPPPLLDSVPPP) shows a compositional bias: pro residues. An FH1 domain is found at 985-1016 (PGPPPPPPPTFLGLPPPPPPPLLDSVPPPPVP). One can recognise an FH2 domain in the interval 1039–1435 (GQPAFTKKKK…HRERNKTRGK (397 aa)). A compositionally biased stretch (basic residues) spans 1420 to 1434 (KQKRANHRERNKTRG). Residues 1444–1456 (SGSSPAAPSQPQG) are compositionally biased toward low complexity. In terms of domain architecture, DAD spans 1515-1547 (DDAADEIMDRIVKSATQVPSQRVVPRERKRSRA). A compositionally biased stretch (basic residues) spans 1541 to 1556 (ERKRSRANRKSLRRTL).

The protein belongs to the formin homology family. In terms of assembly, interacts with nestin/NES-based interfilament (IF). Interacts with SQSTM1. In terms of tissue distribution, expressed in the heart, including left ventricle, kidney, brain and skeletal muscle, including soleus and tibialis anterior (at protein level).

It localises to the cytoplasm. The protein localises to the cytoskeleton. It is found in the myofibril. Its subcellular location is the sarcomere. The protein resides in the z line. Functionally, may play a role in actin filament polymerization in cardiomyocytes. Actin-organizing protein that may cause stress fiber formation together with cell elongation. This chain is FH1/FH2 domain-containing protein 3 (Fhod3), found in Mus musculus (Mouse).